The sequence spans 847 residues: Glucans biosynthesis glucosyltransferase H (847 aa).

The Cytoplasmic segment spans residues 1–138 (MNKTTEYIDA…KWRTVGTIRR (138 aa)). A helical membrane pass occupies residues 139-156 (YILLILTLAQTVVATWYM). At 157–193 (KTILPYQGWALINPMDMVGQDIWVSFMQLLPYMLQTG) the chain is on the periplasmic side. The helical transmembrane segment at 194 to 216 (ILILFAVLFCWVSAGFWTALMGF) threads the bilayer. At 217–511 (LQLLIGRDKY…LVKGMHPVHR (295 aa)) the chain is on the cytoplasmic side. The helical transmembrane segment at 512–534 (AVFLTGVMSYLSAPLWFMFLALS) threads the bilayer. The Periplasmic segment spans residues 535 to 567 (TALQVVHALTEPQYFLQPRQLFPVWPQWRPELA). The chain crosses the membrane as a helical span at residues 568–590 (IALFASTMVLLFLPKLLSIMLIW). Over 591–602 (CKGTKEYGGFWR) the chain is Cytoplasmic. Residues 603–625 (VTLSLLLEVLFSVLLAPVRMLFH) form a helical membrane-spanning segment. Over 626–679 (TVFVVSAFLGWEVVWNSPQRDDDSTPWGEAFMRHGSQLLLGLVWAVGMAWLDLR) the chain is Periplasmic. A helical membrane pass occupies residues 680 to 702 (FLFWLAPIVFSLILSPFVSVISS). The Cytoplasmic segment spans residues 703-847 (RSTVGLRTKR…ALQGRTSSAG (145 aa)).

Belongs to the glycosyltransferase 2 family. OpgH subfamily.

The protein resides in the cell inner membrane. It functions in the pathway glycan metabolism; osmoregulated periplasmic glucan (OPG) biosynthesis. Its function is as follows. Involved in the biosynthesis of osmoregulated periplasmic glucans (OPGs). The polypeptide is Glucans biosynthesis glucosyltransferase H (Salmonella typhi).